Here is a 301-residue protein sequence, read N- to C-terminus: ADP,ATP carrier protein 1 (301 aa).

Solcar repeat units follow at residues 8-100 (YGFA…YKQV), 113-203 (RYFL…AKGM), and 210-299 (TSIF…VKAL). 5 helical membrane-spanning segments follow: residues 10–39 (FAKDFLAGGISAAVSKTAVAPIERVKLLLQ), 77–101 (LANVIRYFPTQALNFAFKDVYKQVF), 112–132 (WRYFLGNLGSGGAAGATSLCF), 181–201 (VSVQGIIIYRAAYFGCFDTAK), and 213–233 (FVSWAIAQVVTTASGIISYPF). ADP-binding residues include Arg-82 and Lys-94. Arg-237 contributes to the ADP binding site. The segment at 237-242 (RRRMMM) is important for transport activity. A Nucleotide carrier signature motif motif is present at residues 237-242 (RRRMMM). The helical transmembrane segment at 276 to 293 (AFSNVLRGTGGALVLVFY) threads the bilayer.

Belongs to the mitochondrial carrier (TC 2.A.29) family. As to quaternary structure, monomer.

Its subcellular location is the mitochondrion inner membrane. It catalyses the reaction ADP(in) + ATP(out) = ADP(out) + ATP(in). The matrix-open state (m-state) is inhibited by the membrane-permeable bongkrekic acid (BKA). The cytoplasmic-open state (c-state) is inhibited by the membrane-impermeable toxic inhibitor carboxyatractyloside (CATR). Functionally, ADP:ATP antiporter that mediates import of ADP into the mitochondrial matrix for ATP synthesis, and export of ATP out to fuel the cell. Cycles between the cytoplasmic-open state (c-state) and the matrix-open state (m-state): operates by the alternating access mechanism with a single substrate-binding site intermittently exposed to either the cytosolic (c-state) or matrix (m-state) side of the inner mitochondrial membrane. The sequence is that of ADP,ATP carrier protein 1 from Anopheles gambiae (African malaria mosquito).